The following is a 352-amino-acid chain: Probable dual-specificity RNA methyltransferase RlmN (352 aa).

Catalysis depends on glutamate 93, which acts as the Proton acceptor. Positions phenylalanine 99–aspartate 333 constitute a Radical SAM core domain. Cysteine 106 and cysteine 336 form a disulfide bridge. The [4Fe-4S] cluster site is built by cysteine 113, cysteine 117, and cysteine 120. S-adenosyl-L-methionine contacts are provided by residues glycine 164 to glutamate 165, serine 196, and asparagine 295. Cysteine 336 (S-methylcysteine intermediate) is an active-site residue.

Belongs to the radical SAM superfamily. RlmN family. [4Fe-4S] cluster is required as a cofactor.

It localises to the cytoplasm. It catalyses the reaction adenosine(2503) in 23S rRNA + 2 reduced [2Fe-2S]-[ferredoxin] + 2 S-adenosyl-L-methionine = 2-methyladenosine(2503) in 23S rRNA + 5'-deoxyadenosine + L-methionine + 2 oxidized [2Fe-2S]-[ferredoxin] + S-adenosyl-L-homocysteine. The catalysed reaction is adenosine(37) in tRNA + 2 reduced [2Fe-2S]-[ferredoxin] + 2 S-adenosyl-L-methionine = 2-methyladenosine(37) in tRNA + 5'-deoxyadenosine + L-methionine + 2 oxidized [2Fe-2S]-[ferredoxin] + S-adenosyl-L-homocysteine. Its function is as follows. Specifically methylates position 2 of adenine 2503 in 23S rRNA and position 2 of adenine 37 in tRNAs. The sequence is that of Probable dual-specificity RNA methyltransferase RlmN from Malacoplasma penetrans (strain HF-2) (Mycoplasma penetrans).